We begin with the raw amino-acid sequence, 265 residues long: 4-hydroxy-tetrahydrodipicolinate reductase (265 aa).

NAD(+) is bound by residues 7–12 (GASGRM) and Asp33. Arg34 is a binding site for NADP(+). NAD(+) contacts are provided by residues 96–98 (GTT) and 120–123 (AANM). Catalysis depends on His153, which acts as the Proton donor/acceptor. Residue His154 participates in (S)-2,3,4,5-tetrahydrodipicolinate binding. Catalysis depends on Lys157, which acts as the Proton donor. 163-164 (GT) provides a ligand contact to (S)-2,3,4,5-tetrahydrodipicolinate.

Belongs to the DapB family.

Its subcellular location is the cytoplasm. It catalyses the reaction (S)-2,3,4,5-tetrahydrodipicolinate + NAD(+) + H2O = (2S,4S)-4-hydroxy-2,3,4,5-tetrahydrodipicolinate + NADH + H(+). The enzyme catalyses (S)-2,3,4,5-tetrahydrodipicolinate + NADP(+) + H2O = (2S,4S)-4-hydroxy-2,3,4,5-tetrahydrodipicolinate + NADPH + H(+). It participates in amino-acid biosynthesis; L-lysine biosynthesis via DAP pathway; (S)-tetrahydrodipicolinate from L-aspartate: step 4/4. Its function is as follows. Catalyzes the conversion of 4-hydroxy-tetrahydrodipicolinate (HTPA) to tetrahydrodipicolinate. This Burkholderia orbicola (strain AU 1054) protein is 4-hydroxy-tetrahydrodipicolinate reductase.